An 895-amino-acid polypeptide reads, in one-letter code: Protein translocase subunit SecA (895 aa).

Residues Q89, G107–T111, and D502 each bind ATP. Disordered regions lie at residues R560–T579 and A848–G884. Zn(2+)-binding residues include C879, C881, C890, and H891.

Belongs to the SecA family. In terms of assembly, monomer and homodimer. Part of the essential Sec protein translocation apparatus which comprises SecA, SecYEG and auxiliary proteins SecDF-YajC and YidC. Requires Zn(2+) as cofactor.

It is found in the cell inner membrane. It localises to the cytoplasm. It carries out the reaction ATP + H2O + cellular proteinSide 1 = ADP + phosphate + cellular proteinSide 2.. Functionally, part of the Sec protein translocase complex. Interacts with the SecYEG preprotein conducting channel. Has a central role in coupling the hydrolysis of ATP to the transfer of proteins into and across the cell membrane, serving both as a receptor for the preprotein-SecB complex and as an ATP-driven molecular motor driving the stepwise translocation of polypeptide chains across the membrane. The protein is Protein translocase subunit SecA of Ruegeria sp. (strain TM1040) (Silicibacter sp.).